The chain runs to 250 residues: 3-deoxy-manno-octulosonate cytidylyltransferase (250 aa).

The protein belongs to the KdsB family.

It is found in the cytoplasm. It catalyses the reaction 3-deoxy-alpha-D-manno-oct-2-ulosonate + CTP = CMP-3-deoxy-beta-D-manno-octulosonate + diphosphate. It functions in the pathway nucleotide-sugar biosynthesis; CMP-3-deoxy-D-manno-octulosonate biosynthesis; CMP-3-deoxy-D-manno-octulosonate from 3-deoxy-D-manno-octulosonate and CTP: step 1/1. It participates in bacterial outer membrane biogenesis; lipopolysaccharide biosynthesis. In terms of biological role, activates KDO (a required 8-carbon sugar) for incorporation into bacterial lipopolysaccharide in Gram-negative bacteria. The sequence is that of 3-deoxy-manno-octulosonate cytidylyltransferase from Legionella pneumophila (strain Corby).